The sequence spans 748 residues: EF-hand domain-containing family member C2 (748 aa).

3 consecutive DM10 domains span residues 75–182 (DKQV…VKMG), 226–366 (DRQV…RSKY), and 428–535 (VSNV…EQHA). EF-hand domains are found at residues 556–591 (EQQKTVKQFFTMSDPSSTGSLPYESFRTLLADLDVE) and 631–666 (EKFSEMIQAFTHEDRDRCGQLSSKEARIICKAFRLP).

Its subcellular location is the cytoplasm. The protein resides in the cytoskeleton. It is found in the cilium axoneme. Its function is as follows. Microtubule inner protein (MIP) part of the dynein-decorated doublet microtubules (DMTs) in cilia axoneme, which is required for motile cilia beating. The polypeptide is EF-hand domain-containing family member C2 (efhc2) (Danio rerio (Zebrafish)).